We begin with the raw amino-acid sequence, 243 residues long: Chromosome partition protein MukE (243 aa).

Residues 223-243 (LMENDTKSADEIDEEFDGEQE) form a disordered region. The segment covering 233–243 (EIDEEFDGEQE) has biased composition (acidic residues).

Belongs to the MukE family. As to quaternary structure, interacts, and probably forms a ternary complex, with MukF and MukB. The complex formation is stimulated by calcium or magnesium.

The protein resides in the cytoplasm. Its subcellular location is the nucleoid. In terms of biological role, involved in chromosome condensation, segregation and cell cycle progression. May participate in facilitating chromosome segregation by condensation DNA from both sides of a centrally located replisome during cell division. Probably acts via its interaction with MukB and MukF. The protein is Chromosome partition protein MukE of Haemophilus influenzae (strain ATCC 51907 / DSM 11121 / KW20 / Rd).